A 630-amino-acid polypeptide reads, in one-letter code: Ubiquitin carboxyl-terminal hydrolase MINDY-2 (630 aa).

The interval 1–209 is disordered; it reads MESGPESLQP…RVPEEEEGAA (209 aa). The span at 24 to 33 shows a compositional bias: polar residues; that stretch reads GSPQEGQQET. The residue at position 94 (serine 94) is a Phosphoserine. Composition is skewed to low complexity over residues 141 to 163 and 170 to 191; these read EESA…SCSD and SPSL…SSEF. Cysteine 267 (nucleophile) is an active-site residue. Histidine 449 (proton acceptor) is an active-site residue. Residues 508–560 form a ubiquitin-binding domain (UBD) region; it reads GQQDQIDQDYLMALSLQQEQQSQEINWEQIPEGISDLELAKKLQEEEDRRASQ. Low complexity predominate over residues 564-599; that stretch reads EQEQAAAAAASASASASASASTQAPQSQPVQASPSS. Residues 564–630 form a disordered region; that stretch reads EQEQAAAAAA…EKEKNSCVIL (67 aa). Positions 606–630 are enriched in basic and acidic residues; it reads SERKRKEPREKDKEKEKEKNSCVIL.

This sequence belongs to the MINDY deubiquitinase family. FAM63 subfamily.

The enzyme catalyses Thiol-dependent hydrolysis of ester, thioester, amide, peptide and isopeptide bonds formed by the C-terminal Gly of ubiquitin (a 76-residue protein attached to proteins as an intracellular targeting signal).. In terms of biological role, hydrolase that can remove 'Lys-48'-linked conjugated ubiquitin from proteins. Can also bind to polyubiquitin chains of different linkage types, including 'Lys-6', 'Lys-11', 'Lys-29', 'Lys-33' and 'Lys-63'. May play a regulatory role at the level of protein turnover. The protein is Ubiquitin carboxyl-terminal hydrolase MINDY-2 (MINDY2) of Bos taurus (Bovine).